Consider the following 286-residue polypeptide: Bark agglutinin I polypeptide B (286 aa).

Residues 1–31 form the signal peptide; the sequence is MASYKFKTQNSFLLLLSISFFFLLLLNKVNS. Asparagine 148 carries N-linked (GlcNAc...) asparagine glycosylation. Glutamate 157 and aspartate 159 together coordinate Mn(2+). Residues aspartate 159, asparagine 163, and aspartate 167 each contribute to the Ca(2+) site. 2 residues coordinate Mn(2+): aspartate 167 and histidine 172.

Belongs to the leguminous lectin family. As to quaternary structure, RPbAI is composed of two polypeptides, A and B, that associate into five different tetrameric isolectins. The A4 combination is the only one devoid of agglutination activity. Isoform B4 displays maximal agglutination activity. In terms of tissue distribution, mostly in the axial and ray parenchymal cells of the inner bark. Fewer in the axial and ray parenchymal cells of the xylem. Strong expression in bark. The lectin accumulates in the inner bark in autumn and winter and disappears in may.

Bark lectins are storage proteins that probably maintain stocks of nitrogen during dormant period. Self-aggregatable molecules that can bind their own carbohydrate side chains. They could also play a role in the plant's defense against phytophagous invertebrates or herbivorous higher animals. This Robinia pseudoacacia (Black locust) protein is Bark agglutinin I polypeptide B.